A 1079-amino-acid polypeptide reads, in one-letter code: Alpha-mannosidase C (1079 aa).

Residues 1–22 form the signal peptide; that stretch reads MFYKTFGFLFIYLIILISGTLS. Residues histidine 44 and aspartate 46 each coordinate Zn(2+). N-linked (GlcNAc...) asparagine glycosylation is found at asparagine 60 and asparagine 96. Aspartate 158 serves as a coordination point for Zn(2+). Aspartate 158 acts as the Nucleophile in catalysis. 4 N-linked (GlcNAc...) asparagine glycosylation sites follow: asparagine 192, asparagine 222, asparagine 248, and asparagine 467. Histidine 475 contributes to the Zn(2+) binding site. 10 N-linked (GlcNAc...) asparagine glycosylation sites follow: asparagine 516, asparagine 527, asparagine 589, asparagine 760, asparagine 769, asparagine 848, asparagine 872, asparagine 912, asparagine 1040, and asparagine 1057.

Belongs to the glycosyl hydrolase 38 family. Zn(2+) serves as cofactor.

It localises to the secreted. The catalysed reaction is Hydrolysis of terminal, non-reducing alpha-D-mannose residues in alpha-D-mannosides.. This is Alpha-mannosidase C (manC) from Dictyostelium discoideum (Social amoeba).